Consider the following 602-residue polypeptide: ATP-dependent lipid A-core flippase 1 (602 aa).

Transmembrane regions (helical) follow at residues 36-56, 80-100, 154-174, 176-196, and 261-281; these read LGFVAAIIGMLGYAAIDVYFL, LFIIVAFTVRGIAHFIANYCL, ILTIVQQSAFIIGLLGLMFYY, WQLSLIFLLITPIIAVIVSVV, and ASVPIIQVIASFALAFVFYAI. The 283-residue stretch at 39–321 folds into the ABC transmembrane type-1 domain; sequence VAAIIGMLGY…LTNVNSEFQQ (283 aa). The region spanning 362–599 is the ABC transporter domain; that stretch reads YKNTNTMTTS…QGAYAQLHSF (238 aa). 398–405 lines the ATP pocket; that stretch reads GRSGSGKS.

Belongs to the ABC transporter superfamily. Lipid exporter (TC 3.A.1.106) family. In terms of assembly, homodimer.

It localises to the cell inner membrane. The catalysed reaction is ATP + H2O + lipid A-core oligosaccharideSide 1 = ADP + phosphate + lipid A-core oligosaccharideSide 2.. Involved in lipopolysaccharide (LPS) biosynthesis. Translocates lipid A-core from the inner to the outer leaflet of the inner membrane. Transmembrane domains (TMD) form a pore in the inner membrane and the ATP-binding domain (NBD) is responsible for energy generation. The polypeptide is ATP-dependent lipid A-core flippase 1 (Colwellia psychrerythraea (strain 34H / ATCC BAA-681) (Vibrio psychroerythus)).